Here is a 305-residue protein sequence, read N- to C-terminus: tRNA uridine(34) hydroxylase (305 aa).

Residues 125–219 (ADENTVVVDT…YLEEVPREQS (95 aa)) form the Rhodanese domain. Cys179 functions as the Cysteine persulfide intermediate in the catalytic mechanism.

This sequence belongs to the TrhO family.

The catalysed reaction is uridine(34) in tRNA + AH2 + O2 = 5-hydroxyuridine(34) in tRNA + A + H2O. In terms of biological role, catalyzes oxygen-dependent 5-hydroxyuridine (ho5U) modification at position 34 in tRNAs. This Brucella ovis (strain ATCC 25840 / 63/290 / NCTC 10512) protein is tRNA uridine(34) hydroxylase.